We begin with the raw amino-acid sequence, 73 residues long: Toxin Td10 (73 aa).

Positions 1 to 7 (IGMVVEC) are cleaved as a signal peptide. In terms of domain architecture, LCN-type CS-alpha/beta spans 8–70 (KDGYLMGPDG…VWERATNRCG (63 aa)). 4 cysteine pairs are disulfide-bonded: Cys18–Cys69, Cys22–Cys44, Cys30–Cys50, and Cys34–Cys52. A Lysine amide modification is found at Lys71.

It belongs to the long (4 C-C) scorpion toxin superfamily. Sodium channel inhibitor family. Beta subfamily. In terms of tissue distribution, expressed by the venom gland.

It localises to the secreted. In terms of biological role, beta toxins bind voltage-independently at site-4 of sodium channels (Nav) and shift the voltage of activation toward more negative potentials thereby affecting sodium channel activation and promoting spontaneous and repetitive firing. This Tityus discrepans (Venezuelan scorpion) protein is Toxin Td10.